The chain runs to 334 residues: Protein-methionine-sulfoxide reductase catalytic subunit MsrP (334 aa).

Residues 1–44 constitute a signal peptide (tat-type signal); that stretch reads MKKNQFLKESDVTAESVFFMKRRQVLKALGISAAALSLPHAAHA. Mo-molybdopterin-binding positions include N88, 91 to 92, C146, T181, N233, R238, and 249 to 251; these read YE and GIK.

It belongs to the MsrP family. Heterodimer of a catalytic subunit (MsrP) and a heme-binding subunit (MsrQ). Requires Mo-molybdopterin as cofactor. In terms of processing, predicted to be exported by the Tat system. The position of the signal peptide cleavage has not been experimentally proven.

It localises to the periplasm. It catalyses the reaction L-methionyl-[protein] + a quinone + H2O = L-methionyl-(S)-S-oxide-[protein] + a quinol. The catalysed reaction is L-methionyl-[protein] + a quinone + H2O = L-methionyl-(R)-S-oxide-[protein] + a quinol. Part of the MsrPQ system that repairs oxidized periplasmic proteins containing methionine sulfoxide residues (Met-O), using respiratory chain electrons. Thus protects these proteins from oxidative-stress damage caused by reactive species of oxygen and chlorine generated by the host defense mechanisms. MsrPQ is essential for the maintenance of envelope integrity under bleach stress, rescuing a wide series of structurally unrelated periplasmic proteins from methionine oxidation, including the primary periplasmic chaperone SurA and the lipoprotein Pal. The catalytic subunit MsrP is non-stereospecific, being able to reduce both (R-) and (S-) diastereoisomers of methionine sulfoxide. This Shigella sonnei (strain Ss046) protein is Protein-methionine-sulfoxide reductase catalytic subunit MsrP.